The primary structure comprises 328 residues: Nitrilase (328 aa).

Positions Val-9–Val-286 constitute a CN hydrolase domain. The Proton acceptor role is filled by Glu-49. Residue Lys-131 is part of the active site. The active-site Nucleophile is the Cys-166.

The protein belongs to the carbon-nitrogen hydrolase superfamily. Nitrilase family.

It catalyses the reaction a nitrile + 2 H2O = a carboxylate + NH4(+). Functionally, nitrilase that hydrolyzes preferentially 4-cyanopyridine. Is also able to hydrolyze some aliphatic nitriles, such as (R,S)-mandelonitrile. In Penicillium rubens (strain ATCC 28089 / DSM 1075 / NRRL 1951 / Wisconsin 54-1255) (Penicillium chrysogenum), this protein is Nitrilase.